The following is a 1112-amino-acid chain: MGVSGLWDILEPVKRPVKLETLVNKRLAIDASIWIYQFLKAVRDKEGNQLKSSHVVGFFRRICKLLFFGIKPVFVFDGGAPSLKRQTIQKRQARRLDREENATVTANKLLALQMRHQAMLLEENNKKATALANASVQNERQMPSSMTLDNSEIKPVLNQRKNYLKPDPYQLPEMDVSFDKLGSSYDPRIMSQDELTQYVSSFTKIEDINLFDFSNIDFDSELFQSLPDTDKYSILSAARLRSRLRMGLSSEQLSEMFPNRMDFSRFQIERLKERNDLTQRLMDFTGMNEFGPSRVVSEKNREYILVKNEGAEGGWALGVISGSTNNEPIIIDDEATKLSSNLIDEDEDEAFYDVPLPSRSHSMNPRELVAAKLKEIKENSFSENQQSDEADYNVTDDLILQLATQQSLEENKKSKELFSLSASEFDKLNSEKKTFEILSTDIPAEDSMNSLLNDEENLKLEHVGDVSNDSLAFAEKKHPENGTSIFMDALPSASREKKTNDLIDPLPFQPMDWGKSIFFEKLKKPTETFMDSKTDIPSEAPDNSKLVEDTNLHTINATVNIESDLDAAKPGIENPIISPLLPVKDDEKDLDLRELNPLEPFENMKEQADDGTVTNPLNVSSDKAMSVYLLSSENAKDTGDIKSESIDAVLPTLETSSPSLSIPTDFQKEASPNKGAAALSSKVEPEVVEKLLDEEEEEMIIRMAEEEKEYDRFVSELNQRHETEEWNQEAFEKRLKELKNQKRSEKRDADEVTQVMIKECQELLRLFGLPYIVAPQEAEAQCSKLLELKLVDGIVTDDSDVFLFGGTRVYRNMFNQNKFVELYLMDDMKREFNVNQMDLIKLAHLLGSDYTMGLSRVGPVLALEILHEFPGDTGLFEFKKWFQRLSTGHASKNDVNTPVKKRINKLVGKIILPSEFPNPLVDEAYLHPAVDDSKQSFQWGIPDLDELRQFLMATVGWSKQRTNEVLLPVIQDMHKKQFVGTQSNLTQFFEGGNTNVYAPRVAYHFKSKRLENALSSFKNQISNQSPMSEEIQADADAFGESKGSDELQSRILRRKKMMASKNSSDSDSDSEDNFLASLTPKTNSSSISIENLPRKTKLSTSLLKKPSKRRRK.

The tract at residues 1 to 95 (MGVSGLWDIL…QTIQKRQARR (95 aa)) is N-domain. Mg(2+) contacts are provided by D30 and D77. One can recognise a UIM domain in the interval 395–414 (TDDLILQLATQQSLEENKKS). The interval 742-870 (KRSEKRDADE…LALEILHEFP (129 aa)) is I-domain. Mg(2+) contacts are provided by E777, E779, D798, D800, and D849. The interval 1056–1112 (KMMASKNSSDSDSDSEDNFLASLTPKTNSSSISIENLPRKTKLSTSLLKKPSKRRRK) is disordered. Residues 1079-1089 (TPKTNSSSISI) show a composition bias toward polar residues.

The protein belongs to the XPG/RAD2 endonuclease family. XPG subfamily. Requires Mg(2+) as cofactor.

Its subcellular location is the nucleus. Functionally, single-stranded DNA endonuclease involved in excision repair of DNA damaged with UV light, bulky adducts, or cross-linking agents. Essential for the incision step of excision-repair. The protein is DNA repair protein rad13 (rad13) of Schizosaccharomyces pombe (strain 972 / ATCC 24843) (Fission yeast).